A 486-amino-acid polypeptide reads, in one-letter code: Cytochrome P450 monooxygenase 1 (486 aa).

Positions 1-21 are cleaved as a signal peptide; that stretch reads MSHFLPTLILTSLTLVAYVLA. The N-linked (GlcNAc...) asparagine glycan is linked to Asn346. Heme is bound at residue Cys430. An N-linked (GlcNAc...) asparagine glycan is attached at Asn434.

This sequence belongs to the cytochrome P450 family. Heme serves as cofactor.

It functions in the pathway mycotoxin biosynthesis. Functionally, cytochrome P450 monooxygenase; part of the gene cluster that mediates the biosynthesis of aphidicolin, a specific inhibitor of eukaryotic DNA synthesis and DNA polymerase alpha. The geranylgeranyl pyrophosphate synthase GGS is required for supplying a sufficient amount of geranylgeranyl diphosphate (GGDP), the general precursor of diterpenes. The diterpene synthase ACS then catalyzes the conversion of geranylgeranyl diphosphate to aphidicolan-16-beta-ol via the intermediate syn-copalyldiphosphate (syn-CDP). In addition to aphidicolan-16-beta-ol, the enzyme also produces low levels of amphidicol-15-ene and amphidicol-16-ene. The cytochrome P450 monooxygenase P450-2 then catalyzes the two-step hydroxylation from aphidicolan-16-beta-ol to 3-deoxyaphidicolin via a 17,3-deoxyaphidicolin intermediate. Finally, the cytochrome P450 monooxygenase P450-1 converts 3-deoxyaphidicolin to aphidicolin. In Neocamarosporium betae (Beet black rot fungus), this protein is Cytochrome P450 monooxygenase 1 (PbP450-1).